The sequence spans 328 residues: Gonadotropin-releasing hormone receptor (328 aa).

At 1–38 (MANRAYLEQKQTQCSIINSSFSMTHRDLPTLTLSGKIR) the chain is on the extracellular side. N-linked (GlcNAc...) asparagine glycosylation is present at Asn-18. A helical membrane pass occupies residues 39–58 (VMVTFFLFLVSTAFNASFLM). At 59–77 (KLQRQTQKKEEVKKLTRMK) the chain is on the cytoplasmic side. Residues 78-97 (VLLKHLTLANLLETVIVMPL) traverse the membrane as a helical segment. The Extracellular portion of the chain corresponds to 98–115 (DGIWNVTVQWYAGEFLCK). Asn-102 carries an N-linked (GlcNAc...) asparagine glycan. A disulfide bridge links Cys-114 with Cys-196. Residues 116–137 (ALSYLKLFSMYAPAFMMVVISL) traverse the membrane as a helical segment. Residues 138 to 164 (DRFLAITRPLAVKSNTKVGQSLIAVAW) are Cytoplasmic-facing. A helical transmembrane segment spans residues 165-184 (FLSIVLAGPQLYIFRMIYVE). The Extracellular portion of the chain corresponds to 185-212 (DISGQTGNFSQCVTHCSFPEWWQEAFYN). N-linked (GlcNAc...) asparagine glycosylation occurs at Asn-192. A helical transmembrane segment spans residues 213 to 232 (LLTFSCLFIGPLLIMLVCNA). At 233–281 (KIIFTLTQVLHQDPHELQLNRSKNNIPRARLRTLKMTVAFATLFTICWT) the chain is on the cytoplasmic side. Residues 282–300 (PYYVLGIWYWFDPEMLNRV) form a helical membrane-spanning segment. Residues 301–306 (SDPVNH) are Extracellular-facing. A helical transmembrane segment spans residues 307–326 (FFFLFGLLNPCFDPLIYGYF). Residues 327 to 328 (SL) lie on the Cytoplasmic side of the membrane.

It belongs to the G-protein coupled receptor 1 family.

It is found in the cell membrane. Receptor for gonadotropin releasing hormone (GnRH) that mediates the action of GnRH to stimulate the secretion of the gonadotropic hormones luteinizing hormone (LH) and follicle-stimulating hormone (FSH). This receptor mediates its action by association with G-proteins that activate a phosphatidylinositol-calcium second messenger system. The sequence is that of Gonadotropin-releasing hormone receptor (GNRHR) from Trichosurus vulpecula (Brush-tailed possum).